A 319-amino-acid polypeptide reads, in one-letter code: Cytochrome c biogenesis protein CcsA (319 aa).

The next 7 helical transmembrane spans lie at 9–29 (ILTH…LITL), 44–64 (GVIG…AYSG), 71–91 (LYES…FPYF), 143–163 (MVLG…LLVI), 225–245 (IISL…VWAN), 259–273 (TWAF…IYLH), and 286–306 (AIVA…VNLL).

It belongs to the CcmF/CycK/Ccl1/NrfE/CcsA family. May interact with Ccs1.

It localises to the plastid. The protein resides in the chloroplast thylakoid membrane. Required during biogenesis of c-type cytochromes (cytochrome c6 and cytochrome f) at the step of heme attachment. In Oenothera glazioviana (Large-flowered evening primrose), this protein is Cytochrome c biogenesis protein CcsA.